Here is a 386-residue protein sequence, read N- to C-terminus: Histidine decarboxylase (386 aa).

Histidine 120 lines the substrate pocket. The residue at position 233 (lysine 233) is an N6-(pyridoxal phosphate)lysine.

The protein belongs to the group II decarboxylase family. Homotetramer. Requires pyridoxal 5'-phosphate as cofactor.

The enzyme catalyses L-histidine + H(+) = histamine + CO2. The chain is Histidine decarboxylase from Vibrio campbellii (strain ATCC BAA-1116).